The chain runs to 186 residues: Ribosome-recycling factor (186 aa).

The protein belongs to the RRF family.

Its subcellular location is the cytoplasm. Functionally, responsible for the release of ribosomes from messenger RNA at the termination of protein biosynthesis. May increase the efficiency of translation by recycling ribosomes from one round of translation to another. The protein is Ribosome-recycling factor of Chelativorans sp. (strain BNC1).